A 485-amino-acid polypeptide reads, in one-letter code: Glutamyl-tRNA(Gln) amidotransferase subunit A (485 aa).

Active-site charge relay system residues include K79 and S154. Residue S178 is the Acyl-ester intermediate of the active site.

The protein belongs to the amidase family. GatA subfamily. Heterotrimer of A, B and C subunits.

The enzyme catalyses L-glutamyl-tRNA(Gln) + L-glutamine + ATP + H2O = L-glutaminyl-tRNA(Gln) + L-glutamate + ADP + phosphate + H(+). In terms of biological role, allows the formation of correctly charged Gln-tRNA(Gln) through the transamidation of misacylated Glu-tRNA(Gln) in organisms which lack glutaminyl-tRNA synthetase. The reaction takes place in the presence of glutamine and ATP through an activated gamma-phospho-Glu-tRNA(Gln). The sequence is that of Glutamyl-tRNA(Gln) amidotransferase subunit A from Clostridium botulinum (strain Alaska E43 / Type E3).